Consider the following 313-residue polypeptide: Pyrimidine-specific ribonucleoside hydrolase RihB (313 aa).

Residue D11 is the Proton acceptor of the active site. Positions 11, 16, and 124 each coordinate Ca(2+). 2 residues coordinate substrate: Q227 and H239. Residue D240 participates in Ca(2+) binding.

Belongs to the IUNH family. RihB subfamily. As to quaternary structure, homotetramer. Ca(2+) is required as a cofactor.

It carries out the reaction a pyrimidine ribonucleoside + H2O = a pyrimidine nucleobase + D-ribose. Its function is as follows. Hydrolyzes cytidine or uridine to ribose and cytosine or uracil, respectively. Has a clear preference for cytidine over uridine. Strictly specific for ribonucleosides. The protein is Pyrimidine-specific ribonucleoside hydrolase RihB of Escherichia coli (strain SE11).